The sequence spans 230 residues: Interleukin-22 receptor subunit alpha-2 (230 aa).

An N-terminal signal peptide occupies residues 1–20 (MMPKHCLLGLLIILLSSATE). Fibronectin type-III domains follow at residues 29 to 128 (TPQK…TKLD) and 129 to 230 (PPVV…VHIP). 2 disulfides stabilise this stretch: cysteine 77–cysteine 85 and cysteine 205–cysteine 226.

The protein belongs to the type II cytokine receptor family. Highly expressed in lymph nodes and at lower levels in lung, spleen, and thymus. Not expressed in kidney, liver and heart.

It is found in the secreted. Its function is as follows. Receptor for IL22. Binds to IL22, prevents interaction with the functional IL-22R complex and blocks the activity of IL22 (in vitro). May play an important role as an IL22 antagonist in the regulation of inflammatory responses. This Mus musculus (Mouse) protein is Interleukin-22 receptor subunit alpha-2 (Il22ra2).